A 3011-amino-acid chain; its full sequence is Genome polyprotein (3011 aa).

N-acetylserine; by host is present on S2. The interaction with STAT1 stretch occupies residues 2–23; that stretch reads STNPKPQKKNKRNTNRRPQDVK. The interval 2-58 is interaction with EIF2AK2/PKR; sequence STNPKPQKKNKRNTNRRPQDVKFPGGGQIVGGVYLLPRRGPRLGVRATRKTSERSQP. The interval 2 to 59 is interaction with DDX3X; sequence STNPKPQKKNKRNTNRRPQDVKFPGGGQIVGGVYLLPRRGPRLGVRATRKTSERSQPR. The tract at residues 2–75 is disordered; the sequence is STNPKPQKKN…PKARRPEGRT (74 aa). The Cytoplasmic segment spans residues 2–168; the sequence is STNPKPQKKN…EDGVNYATGN (167 aa). 2 short sequence motifs (nuclear localization signal) span residues 5 to 13 and 38 to 43; these read PKPQKKNKR and PRRGPR. The span at 7–16 shows a compositional bias: basic residues; the sequence is PQKKNKRNTN. Residues 32–47 show a composition bias toward low complexity; that stretch reads GGVYLLPRRGPRLGVR. The residue at position 53 (S53) is a Phosphoserine; by host. Short sequence motifs (nuclear localization signal) lie at residues 58–64 and 66–71; these read PRGRRQP and PKARRP. Over residues 58–68 the composition is skewed to basic residues; it reads PRGRRQPIPKA. At S99 the chain carries Phosphoserine; by host. The segment at 112-152 is important for endoplasmic reticulum and mitochondrial localization; the sequence is PRRRSRNLGKVIDTLTCGFADLMGYIPLVGAPLGGAARALA. S116 carries the phosphoserine; by host PKA modification. Positions 122-173 are interaction with APOA2; that stretch reads VIDTLTCGFADLMGYIPLVGAPLGGAARALAHGVRVLEDGVNYATGNLPGCS. The interval 164–167 is important for lipid droplets localization; that stretch reads YATG. A helical transmembrane segment spans residues 169–189; it reads LPGCSFSIFLLALLSCLTVPA. The propeptide at 178 to 191 is ER anchor for the core protein, removed in mature form by host signal peptidase; the sequence is LLALLSCLTVPASA. The Lumenal portion of the chain corresponds to 190 to 358; that stretch reads SAYQVRNSTG…AGAHWGVLAG (169 aa). 3 N-linked (GlcNAc...) asparagine; by host glycosylation sites follow: N196, N209, and N234. Positions 265–296 are important for fusion; it reads LVGSATLCSALYVGDLCGSVFLVGQLFTFSPR. N-linked (GlcNAc...) asparagine; by host glycosylation occurs at N305. The helical transmembrane segment at 359–379 threads the bilayer; it reads IAYFSMVGNWAKVLVVLLLFA. Residues 380-725 are Lumenal-facing; that stretch reads GVDAETHVTG…WEYVVLLFLL (346 aa). The interval 385–411 is HVR1; the sequence is THVTGGSAGHTVSGFVSLLAPGAKQNV. N417, N423, N430, and N448 each carry an N-linked (GlcNAc...) (high mannose) asparagine; by host glycan. Disulfide bonds link C429/C552, C452/C459, C486/C494, and C503/C508. The interval 474 to 480 is HVR2; that stretch reads YANGSGP. N-linked (GlcNAc...) asparagine; by host glycosylation occurs at N476. The tract at residues 481 to 493 is CD81-binding 1; sequence DQRPYCWHYPPKP. The N-linked (GlcNAc...) (high mannose) asparagine; by host glycan is linked to N532. The interval 543–551 is CD81-binding 2; sequence RPPLGNWFG. N556 carries an N-linked (GlcNAc...) (high mannose) asparagine; by host glycan. A disulfide bond links C564 and C569. N576 carries an N-linked (GlcNAc...) (high mannose) asparagine; by host glycan. 3 disulfides stabilise this stretch: C581-C585, C597-C620, and C607-C644. N-linked (GlcNAc...) (high mannose) asparagine; by host glycosylation is found at N623 and N645. An intrachain disulfide couples C652 to C677. Residues 660 to 671 form an EIF2AK2/eIF2-alpha phosphorylation homology domain (PePHD) region; it reads SELSPLLLTTTQ. The helical transmembrane segment at 726–746 threads the bilayer; sequence LADARVCSCLWMMLLISQAEA. Residues 747 to 757 are Lumenal-facing; that stretch reads ALENLVILNAA. A helical membrane pass occupies residues 758 to 778; it reads SLAGTHGLVSFLVFFCFAWYL. The Cytoplasmic segment spans residues 779–781; that stretch reads KGK. The helical transmembrane segment at 782–803 threads the bilayer; sequence WVPGAVYTFYGMWPLLLLLLAL. At 804 to 813 the chain is on the lumenal side; that stretch reads PQRAYALDTE. The helical transmembrane segment at 814–834 threads the bilayer; that stretch reads VAASCGGVVLVGLMALTLSPY. Over 835-838 the chain is Cytoplasmic; the sequence is YKRY. A helical transmembrane segment spans residues 839-859; it reads ISWCLWWLQYFLTRVEAQLHV. Over 860–881 the chain is Lumenal; it reads WIPPLNVRGGRDAVILLMCAVH. Residues 882–902 form a helical membrane-spanning segment; sequence PTLVFDITKLLLAVFGPLWIL. The 128-residue stretch at 899-1026 folds into the Peptidase C18 domain; the sequence is LWILQASLLK…GMVSKGWRLL (128 aa). The Cytoplasmic portion of the chain corresponds to 903–1657; sequence QASLLKVPYF…CMSADLEVVT (755 aa). Residues 904 to 1206 form a protease NS2-3 region; sequence ASLLKVPYFV…PVENLETTMR (303 aa). C922 is lipidated: S-palmitoyl cysteine; by host. The interaction with host SCPS1 stretch occupies residues 929–949; that stretch reads IGGHYVQMVIIKLGALTGTYV. Active-site for protease NS2 activity; shared with dimeric partner residues include H952, E972, and C993. The region spanning 1027–1208 is the Peptidase S29 domain; it reads APITAYAQQT…ENLETTMRSP (182 aa). Residues H1083 and D1107 each act as charge relay system; for serine protease NS3 activity in the active site. Residues C1123 and C1125 each coordinate Zn(2+). S1165 functions as the Charge relay system; for serine protease NS3 activity in the catalytic mechanism. C1171 and H1175 together coordinate Zn(2+). One can recognise a Helicase ATP-binding domain in the interval 1217–1369; that stretch reads PVVPQSFQVA…PNIEEVALST (153 aa). Residue 1230 to 1237 coordinates ATP; that stretch reads APTGSGKS. Mg(2+)-binding residues include S1237 and E1317. The short motif at 1316–1319 is the DECH box element; the sequence is DECH. Residues 1486–1497 form an RNA-binding region; the sequence is QRRGRTGRGKPG. Residues 1658 to 1678 form a helical membrane-spanning segment; the sequence is STWVLVGGVLAALAAYCLSTG. The NS3-binding stretch occupies residues 1679–1690; sequence CVVIVGRVVLSG. Over 1679–1805 the chain is Cytoplasmic; that stretch reads CVVIVGRVVL…AVTSPLTTSQ (127 aa). Residues 1806 to 1826 traverse the membrane as a helical segment; it reads TLLFNILGGWVAAQLAAPGAA. Residues 1827–1828 lie on the Lumenal side of the membrane; it reads TA. The chain crosses the membrane as a helical span at residues 1829-1849; that stretch reads FVGAGLAGAAIGSVGLGKVLI. Positions 1833–1861 are glycine zipper; it reads GLAGAAIGSVGLGKVLIDILAGYGAGVAG. Residue D1850 is a topological domain, cytoplasmic. A helical transmembrane segment spans residues 1851-1871; it reads ILAGYGAGVAGALVAFKIMSG. Residues 1872–1881 lie on the Lumenal side of the membrane; the sequence is EVPSTEDLVN. A helical membrane pass occupies residues 1882 to 1902; the sequence is LLPAILSPGALVVGVVCAAIL. At 1903 to 1972 the chain is on the cytoplasmic side; it reads RRHVGPGEGA…WISSECTTPC (70 aa). 2 S-palmitoyl cysteine; by host lipidation sites follow: C1968 and C1972. The stretch at 1973–2003 is an intramembrane region; that stretch reads SGSWLRDIWDWICEVLSDFKTWLKAKLMPQL. The membrane-binding stretch occupies residues 1978-1998; the sequence is RDIWDWICEVLSDFKTWLKAK. Topologically, residues 2004-2990 are cytoplasmic; the sequence is PGIPFVSCQR…YHSVSHARPR (987 aa). The tract at residues 2005–2221 is RNA-binding; it reads GIPFVSCQRG…KATCTANHDS (217 aa). Residues C2011, C2029, C2031, and C2052 each coordinate Zn(2+). The tract at residues 2120-2208 is FKBP8-binding; the sequence is EFFTELDGVR…ASSSASQLSA (89 aa). The tract at residues 2120-2332 is transcriptional activation; that stretch reads EFFTELDGVR…PVPPPRKKRT (213 aa). The segment at 2135–2139 is interaction with non-structural protein 4A; that stretch reads PPCKP. The segment at 2189–2441 is interaction with host SKP2; that stretch reads RLARGSPPSV…TPCAAEEQKL (253 aa). S2194 carries the phosphoserine; by host; in p56 modification. S2197, S2201, S2204, S2207, and S2210 each carry phosphoserine; by host; in p58. Residues 2206–2245 form an ISDR region; the sequence is LSAPSLKATCTANHDSPDAELIEANLLWRQEMGGNITRVE. Residues 2210–2275 form an EIF2AK2/PKR-binding region; that stretch reads SLKATCTANH…REISVPAEIL (66 aa). The interval 2249-2306 is NS4B-binding; the sequence is KVVILDSFDPLVAEEDEREISVPAEILRKSRRFAQALPVWARPDYNPPLVETWKKPDY. 2 disordered regions span residues 2312-2334 and 2351-2408; these read HGCPLPPPKSPPVPPPRKKRTVV and SFGS…WSTV. A compositionally biased stretch (pro residues) spans 2315 to 2326; that stretch reads PLPPPKSPPVPP. The residue at position 2321 (S2321) is a Phosphoserine; by host. The SH3-binding signature appears at 2322–2325; it reads PPVP. A Nuclear localization signal motif is present at residues 2326-2334; the sequence is PPRKKRTVV. The interval 2332 to 2441 is interaction with host IFI27; sequence TVVLTESTLS…TPCAAEEQKL (110 aa). Residues 2351–2369 show a composition bias toward low complexity; that stretch reads SFGSSSTSGITGDNTTTSS. The interval 2354-2377 is V3; it reads SSSTSGITGDNTTTSSEPAPSGCP. A phosphoserine; by host mark is found at S2449 and S2462. Residues 2634-2752 form the RdRp catalytic domain; the sequence is PMGFSYDTRC…ICESAGVQED (119 aa). The Mg(2+) site is built by D2640, D2738, and D2739. The chain crosses the membrane as a helical span at residues 2991-3011; the sequence is WIWFCLLLLAAGVGIYLLPNR.

The protein belongs to the hepacivirus polyprotein family. As to quaternary structure, homooligomer. Interacts with E1 (via C-terminus). Interacts with the non-structural protein 5A. Interacts (via N-terminus) with host STAT1 (via SH2 domain); this interaction results in decreased STAT1 phosphorylation and ubiquitin-mediated proteasome-dependent STAT1 degradation, leading to decreased IFN-stimulated gene transcription. Interacts with host STAT3; this interaction constitutively activates STAT3. Interacts with host LTBR receptor. Interacts with host TNFRSF1A receptor and possibly induces apoptosis. Interacts with host HNRPK. Interacts with host YWHAE. Interacts with host UBE3A/E6AP. Interacts with host DDX3X. Interacts with host APOA2. Interacts with host RXRA protein. Interacts with host SP110 isoform 3/Sp110b; this interaction sequesters the transcriptional corepressor SP110 away from the nucleus. Interacts with host CREB3 nuclear transcription protein; this interaction triggers cell transformation. Interacts with host ACY3. Interacts with host C1QR1. Interacts with host RBM24; this interaction, which enhances the interaction of the mature core protein with 5'-UTR, may inhibit viral translation and favor replication. Interacts with host EIF2AK2/PKR; this interaction induces the autophosphorylation of EIF2AK2. Part of the viral assembly initiation complex composed of NS2, E1, E2, NS3, NS4A, NS5A and the mature core protein. In terms of assembly, forms a heterodimer with envelope glycoprotein E2. Interacts with mature core protein. Interacts with protease NS2. The heterodimer E1/E2 interacts with host CLDN1; this interaction plays a role in viral entry into host cell. Interacts with host SPSB2 (via C-terminus). Part of the viral assembly initiation complex composed of NS2, E1, E2, NS3, NS4A, NS5A and the mature core protein. Interacts with host NEURL3; this interaction prevents E1 binding to glycoprotein E2. Forms a heterodimer with envelope glycoprotein E1. Interacts with host CD81 and SCARB1 receptors; these interactions play a role in viral entry into host cell. Interacts with host EIF2AK2/PKR; this interaction inhibits EIF2AK2 and probably allows the virus to evade the innate immune response. Interacts with host CD209/DC-SIGN and CLEC4M/DC-SIGNR. Interact with host SPCS1; this interaction is essential for viral particle assembly. Interacts with protease NS2. The heterodimer E1/E2 interacts with host CLDN1; this interaction plays a role in viral entry into host cell. Part of the viral assembly initiation complex composed of NS2, E1, E2, NS3, NS4A, NS5A and the mature core protein. Interacts with host SLC3A2/4F2hc; the interaction may facilitate viral entry into host cell. Interacts with human PLSCR1. As to quaternary structure, homohexamer. Homoheptamer. Interacts with protease NS2. In terms of assembly, homodimer. Interacts with host SPCS1; this interaction is essential for viral particle assembly. Interacts with envelope glycoprotein E1. Interacts with envelope glycoprotein E2. Interacts with viroporin p7. Interacts with serine protease/helicase NS3. Part of the replication complex composed of NS2, NS3, NS4A, NS4B, NS5A and the RNA-directed RNA polymerase embedded in an ER-derived membranous web. Part of the viral assembly initiation complex composed of NS2, E1, E2, NS3, NS4A, NS5A and the mature core protein. Interacts with protease NS2. Interacts with non-structural protein 4A; this interaction stabilizes the folding of NS3 serine protease. NS3-NS4A interaction is essential for NS3 activation and allows membrane anchorage of the latter. NS3/NS4A complex also prevents phosphorylation of host IRF3, thus preventing the establishment of dsRNA induced antiviral state. Interacts with host MAVS; this interaction leads to the cleavage and inhibition of host MAVS. Interacts with host TICAM1; this interaction leads to the cleavage and inhibition of host TICAM1. Interacts with host TANK-binding kinase/TBK1; this interaction results in the inhibition of the association between TBK1 and IRF3, which leads to the inhibition of IRF3 activation. Interacts with host RBM24. Part of the replication complex composed of NS2, NS3, NS4A, NS4B, NS5A and the RNA-directed RNA polymerase embedded in an ER-derived membranous web. Part of the viral assembly initiation complex composed of NS2, E1, E2, NS3, NS4A, NS5A and the mature core protein. As to quaternary structure, interacts with NS3 serine protease; this interaction stabilizes the folding of NS3 serine protease. NS3-NS4A interaction is essential for NS3 activation and allows membrane anchorage of the latter. Interacts with non-structural protein 5A (via N-terminus). Part of the replication complex composed of NS2, NS3, NS4A, NS4B, NS5A and the RNA-directed RNA polymerase embedded in an ER-derived membranous web. Part of the viral assembly initiation complex composed of NS2, E1, E2, NS3, NS4A, NS5A and the mature core protein. In terms of assembly, homomultimer. Interacts with non-structural protein NS5A. Interacts with host PLA2G4C; this interaction likely initiates the recruitment of replication complexes to lipid droplets. Interacts with host STING; this interaction disrupts the interaction between STING and TBK1 thereby suppressing the interferon signaling. Part of the replication complex composed of NS2, NS3, NS4A, NS4B, NS5A and the RNA-directed RNA polymerase embedded in an ER-derived membranous web. Monomer. Homodimer; dimerization is required for RNA-binding. Interacts with mature core protein. Interacts (via N-terminus) with non-structural protein 4A. Interacts with non-structural protein 4B. Interacts with RNA-directed RNA polymerase. Part of the viral assembly initiation complex composed of NS2, E1, E2, NS3, NS4A, NS5A and the mature core protein. Part of the replication complex composed of NS2, NS3, NS4A, NS4B, NS5A and the RNA-directed RNA polymerase. Interacts with host GRB2. Interacts with host BIN1. Interacts with host PIK3R1. Interacts with host SRCAP. Interacts with host FKBP8. Interacts with host VAPB. Interacts with host EIF2AK2/PKR; this interaction leads to disruption of EIF2AK2 dimerization by NS5A and probably allows the virus to evade the innate immune response. Interacts (via N-terminus) with host PACSIN2 (via N-terminus); this interaction attenuates protein kinase C alpha-mediated phosphorylation of PACSIN2 by disrupting the interaction between PACSIN2 and PRKCA. Interacts (via N-terminus) with host SRC kinase (via SH2 domain). Interacts with most Src-family kinases. Interacts with host IFI27 and SKP2; promotes the ubiquitin-mediated proteasomal degradation of NS5A. Interacts with host GPS2. Interacts with host TNFRSF21; this interaction allows the modulation by the virus of JNK, p38 MAPK, STAT3, and Akt signaling pathways in a DR6-dependent manner. Interacts (via N-terminus) with host CIDEB (via N-terminus); this interaction seems to regulate the association of HCV particles with APOE. Interacts with host CHKA/Choline Kinase-alpha; CHKA bridges host PI4KA and NS5A and potentiates NS5A-stimulated PI4KA activity, which then facilitates the targeting of the ternary complex to the ER for viral replication. Interacts with host SPSB2 (via C-terminus); this interaction targets NS5A for ubiquitination and degradation. Interacts with host RAB18; this interaction may promote the association of NS5A and other replicase components with lipid droplets. Interacts with host TRIM14; this interaction induces the degradation of NS5A. As to quaternary structure, homooligomer. Interacts with non-structural protein 5A. Interacts with host VAPB. Interacts with host PRK2/PKN2. Interacts with host HNRNPA1 and SEPT6; these interactions facilitate viral replication. Part of the replication complex composed of NS2, NS3, NS4A, NS4B, NS5A and the RNA-directed RNA polymerase. Initiates RNA transcription/replication at a flavin adenine dinucleotide (FAD), resulting in a 5'- FAD cap on viral RNAs. In this way, recognition of viral 5' RNA by host pattern recognition receptors can be bypassed, thereby evading activation of antiviral pathways. Requires Zn(2+) as cofactor. It depends on Mg(2+) as a cofactor. In terms of processing, specific enzymatic cleavages in vivo yield mature proteins. The structural proteins, core, E1, E2 and p7 are produced by proteolytic processing by host signal peptidases. The core protein precursor is synthesized as a 23 kDa protein which is retained in the ER membrane through the hydrophobic signal peptide. Cleavage by the signal peptidase releases the 21 kDa mature core protein. The cleavage of the core protein precursor occurs between aminoacids 176 and 188 but the exact cleavage site is not known. Some degraded forms of the core protein appear as well during the course of infection. The other proteins (p7, NS2, NS3, NS4A, NS4B, NS5A and NS5B) are cleaved by the viral proteases. Autoprocessing between NS2 and NS3 is mediated by the NS2 cysteine protease catalytic domain and regulated by the NS3 N-terminal domain. Phosphorylated by host PKC and PKA. Post-translationally, ubiquitinated; mediated by UBE3A and leading to core protein subsequent proteasomal degradation. In terms of processing, highly N-glycosylated. Palmitoylation is required for NS2/3 autoprocessing and E2 recruitment to membranes. Post-translationally, palmitoylated. This modification may play a role in its polymerization or in protein-protein interactions. In terms of processing, cleaved by host caspases which are probably activated by the viral infection. Ubiquitinated. Ubiquitination, most probably at Lys-2350, mediated by host IFI27 and SKP2 leads to proteasomal degradation, restricting viral infection. Post-translationally, phosphorylated on serines in a basal form termed p56. p58 is a hyperphosphorylated form of p56. p56 and p58 coexist in the cell in roughly equivalent amounts. Hyperphosphorylation is dependent on the presence of NS4A. Host CSNK1A1/CKI-alpha or RPS6KB1 kinases may be responsible for NS5A phosphorylation. Phosphorylated NS5A is involved in viral replication. In terms of processing, tyrosine phosphorylation is essential for the interaction with host SRC. The N-terminus is phosphorylated by host PRK2/PKN2.

Its subcellular location is the host endoplasmic reticulum membrane. The protein resides in the host mitochondrion membrane. It localises to the virion. The protein localises to the host cytoplasm. It is found in the host nucleus. Its subcellular location is the host lipid droplet. The protein resides in the virion membrane. It localises to the host mitochondrion. The protein localises to the host cell membrane. It is found in the host perinuclear region. The catalysed reaction is Hydrolysis of four peptide bonds in the viral precursor polyprotein, commonly with Asp or Glu in the P6 position, Cys or Thr in P1 and Ser or Ala in P1'.. It carries out the reaction a ribonucleoside 5'-triphosphate + H2O = a ribonucleoside 5'-diphosphate + phosphate + H(+). The enzyme catalyses ATP + H2O = ADP + phosphate + H(+). It catalyses the reaction RNA(n) + a ribonucleoside 5'-triphosphate = RNA(n+1) + diphosphate. Its activity is regulated as follows. Inhibited by the antiviral drug hexamethylene amiloride. Inhibition by amantadine appears to be genotype-dependent. Also inhibited by long-alkyl-chain iminosugar derivatives. With respect to regulation, activity is up-regulated by PRK2/PKN2-mediated phosphorylation. In terms of biological role, packages viral RNA to form a viral nucleocapsid, and promotes virion budding. Participates in the viral particle production as a result of its interaction with the non-structural protein 5A. Binds RNA and may function as a RNA chaperone to induce the RNA structural rearrangements taking place during virus replication. Modulates viral translation initiation by interacting with viral IRES and 40S ribosomal subunit. Affects various cell signaling pathways, host immunity and lipid metabolism. Prevents the establishment of cellular antiviral state by blocking the interferon-alpha/beta (IFN-alpha/beta) and IFN-gamma signaling pathways and by blocking the formation of phosphorylated STAT1 and promoting ubiquitin-mediated proteasome-dependent degradation of STAT1. Activates STAT3 leading to cellular transformation. Regulates the activity of cellular genes, including c-myc and c-fos. May repress the promoter of p53, and sequester CREB3 and SP110 isoform 3/Sp110b in the cytoplasm. Represses cell cycle negative regulating factor CDKN1A, thereby interrupting an important check point of normal cell cycle regulation. Targets transcription factors involved in the regulation of inflammatory responses and in the immune response: suppresses TNF-induced NF-kappa-B activation, and activates AP-1. Binds to dendritic cells (DCs) via C1QR1, resulting in down-regulation of T-lymphocytes proliferation. Alters lipid metabolism by interacting with hepatocellular proteins involved in lipid accumulation and storage. Induces up-regulation of FAS promoter activity, and thereby contributes to the increased triglyceride accumulation in hepatocytes (steatosis). Functionally, forms a heterodimer with envelope glycoprotein E2, which mediates virus attachment to the host cell, virion internalization through clathrin-dependent endocytosis and fusion with host membrane. Fusion with the host cell is most likely mediated by both E1 and E2, through conformational rearrangements of the heterodimer required for fusion rather than a classical class II fusion mechanism. E1/E2 heterodimer binds host apolipoproteins such as APOB and APOE thereby forming a lipo-viro-particle (LVP). APOE associated to the LVP allows the initial virus attachment to cell surface receptors such as the heparan sulfate proteoglycans (HSPGs), syndecan-1 (SDC1), syndecan-1 (SDC2), the low-density lipoprotein receptor (LDLR) and scavenger receptor class B type I (SCARB1). The cholesterol transfer activity of SCARB1 allows E2 exposure and binding of E2 to SCARB1 and the tetraspanin CD81. E1/E2 heterodimer binding on CD81 activates the epithelial growth factor receptor (EGFR) signaling pathway. Diffusion of the complex E1-E2-EGFR-SCARB1-CD81 to the cell lateral membrane allows further interaction with Claudin 1 (CLDN1) and occludin (OCLN) to finally trigger HCV entry. Forms a heterodimer with envelope glycoprotein E1, which mediates virus attachment to the host cell, virion internalization through clathrin-dependent endocytosis and fusion with host membrane. Fusion with the host cell is most likely mediated by both E1 and E2, through conformational rearrangements of the heterodimer required for fusion rather than a classical class II fusion mechanism. The interaction between envelope glycoprotein E2 and host apolipoprotein E/APOE allows the proper assembly, maturation and infectivity of the viral particles. This interaction is probably promoted via the up-regulation of cellular autophagy by the virus. E1/E2 heterodimer binds host apolipoproteins such as APOB and APOE thereby forming a lipo-viro-particle (LVP). APOE associated to the LVP allows the initial virus attachment to cell surface receptors such as the heparan sulfate proteoglycans (HSPGs), syndecan-1 (SDC1), syndecan-1 (SDC2), the low-density lipoprotein receptor (LDLR) and scavenger receptor class B type I (SCARB1). The cholesterol transfer activity of SCARB1 allows E2 exposure and binding of E2 to SCARB1 and the tetraspanin CD81. E1/E2 heterodimer binding on CD81 activates the epithelial growth factor receptor (EGFR) signaling pathway. Diffusion of the complex E1-E2-EGFR-SCARB1-CD81 to the cell lateral membrane allows further interaction with Claudin 1 (CLDN1) and occludin (OCLN) to finally trigger HCV entry. Inhibits host EIF2AK2/PKR activation, preventing the establishment of an antiviral state. Viral ligand for CD209/DC-SIGN and CLEC4M/DC-SIGNR, which are respectively found on dendritic cells (DCs), and on liver sinusoidal endothelial cells and macrophage-like cells of lymph node sinuses. These interactions allow the capture of circulating HCV particles by these cells and subsequent facilitated transmission to permissive cells such as hepatocytes and lymphocyte subpopulations. The interaction between E2 and host amino acid transporter complex formed by SLC3A2 and SLC7A5/LAT1 may facilitate viral entry into host cell. Its function is as follows. Ion channel protein that acts as a viroporin and plays an essential role in the assembly, envelopment and secretion of viral particles. Regulates the host cell secretory pathway, which induces the intracellular retention of viral glycoproteins and favors assembly of viral particles. Creates a pore in acidic organelles and releases Ca(2+) and H(+) in the cytoplasm of infected cells, leading to a productive viral infection. High levels of cytoplasmic Ca(2+) may trigger membrane trafficking and transport of viral ER-associated proteins to viroplasms, sites of viral genome replication. This ionic imbalance induces the assembly of the inflammasome complex, which triggers the maturation of pro-IL-1beta into IL-1beta through the action of caspase-1. Targets also host mitochondria and induces mitochondrial depolarization. In addition of its role as a viroporin, acts as a lipid raft adhesion factor. In terms of biological role, cysteine protease required for the proteolytic auto-cleavage between the non-structural proteins NS2 and NS3. The N-terminus of NS3 is required for the function of NS2 protease (active region NS2-3). Promotes the initiation of viral particle assembly by mediating the interaction between structural and non-structural proteins. Functionally, displays three enzymatic activities: serine protease with a chymotrypsin-like fold, NTPase and RNA helicase. NS3 serine protease, in association with NS4A, is responsible for the cleavages of NS3-NS4A, NS4A-NS4B, NS4B-NS5A and NS5A-NS5B. The NS3/NS4A complex prevents phosphorylation of host IRF3, thus preventing the establishment of dsRNA induced antiviral state. The NS3/NS4A complex induces host amino acid transporter component SLC3A2, thus contributing to HCV propagation. NS3 RNA helicase binds to RNA and unwinds both dsDNA and dsRNA in the 3' to 5' direction, and likely resolves RNA complicated stable secondary structures in the template strand. Binds a single ATP and catalyzes the unzipping of a single base pair of dsRNA. Inhibits host antiviral proteins TBK1 and IRF3 thereby preventing the establishment of an antiviral state. Cleaves host MAVS/CARDIF thereby preventing the establishment of an antiviral state. Cleaves host TICAM1/TRIF, thereby disrupting TLR3 signaling and preventing the establishment of an antiviral state. The NS3/NS4A complex prevents phosphorylation of host IRF3, thus preventing the establishment of dsRNA induced antiviral state. The NS3/NS4A complex induces host amino acid transporter component SLC3A2, thus contributing to HCV propagation. Its function is as follows. Induces a specific membrane alteration that serves as a scaffold for the virus replication complex. This membrane alteration gives rise to the so-called ER-derived membranous web that contains the replication complex. NS4B self-interaction contributes to its function in membranous web formation. Promotes host TRIF protein degradation in a CASP8-dependent manner thereby inhibiting host TLR3-mediated interferon signaling. Disrupts the interaction between STING and TBK1 contributing to the inhibition of interferon signaling. In terms of biological role, phosphorylated protein that is indispensable for viral replication and assembly. Both hypo- and hyperphosphorylated states are required for the viral life cycle. The hyperphosphorylated form of NS5A is an inhibitor of viral replication. Involved in RNA-binding and especially in binding to the viral genome. Zinc is essential for RNA-binding. Participates in the viral particle production as a result of its interaction with the mature viral core protein. Its interaction with host VAPB may target the viral replication complex to vesicles. Down-regulates viral IRES translation initiation. Mediates interferon resistance, presumably by interacting with and inhibiting host EIF2AK2/PKR. Prevents BIN1-induced apoptosis. Acts as a transcriptional activator of some host genes important for viral replication when localized in the nucleus. Via the interaction with host PACSIN2, modulates lipid droplet formation in order to promote virion assembly. Modulates TNFRSF21/DR6 signaling pathway for viral propagation. Functionally, RNA-dependent RNA polymerase that performs primer-template recognition and RNA synthesis during viral replication. Initiates RNA transcription/replication at a flavin adenine dinucleotide (FAD), resulting in a 5'- FAD cap on viral RNAs. In this way, recognition of viral 5' RNA by host pattern recognition receptors can be bypassed, thereby evading activation of antiviral pathways. This chain is Genome polyprotein, found in Homo sapiens (Human).